The following is a 607-amino-acid chain: Isocitrate dehydrogenase kinase/phosphatase (607 aa).

Residues A328–L334 and K349 each bind ATP. D384 is a catalytic residue.

It belongs to the AceK family.

It localises to the cytoplasm. The enzyme catalyses L-seryl-[isocitrate dehydrogenase] + ATP = O-phospho-L-seryl-[isocitrate dehydrogenase] + ADP + H(+). Bifunctional enzyme which can phosphorylate or dephosphorylate isocitrate dehydrogenase (IDH) on a specific serine residue. This is a regulatory mechanism which enables bacteria to bypass the Krebs cycle via the glyoxylate shunt in response to the source of carbon. When bacteria are grown on glucose, IDH is fully active and unphosphorylated, but when grown on acetate or ethanol, the activity of IDH declines drastically concomitant with its phosphorylation. The polypeptide is Isocitrate dehydrogenase kinase/phosphatase (Cupriavidus metallidurans (strain ATCC 43123 / DSM 2839 / NBRC 102507 / CH34) (Ralstonia metallidurans)).